Consider the following 315-residue polypeptide: Endolytic peptidoglycan transglycosylase RlpA (315 aa).

The first 19 residues, 1 to 19, serve as a signal peptide directing secretion; it reads MGLALEKVCFLGVIFLISA. C20 is lipidated: N-palmitoyl cysteine. C20 carries the S-diacylglycerol cysteine lipid modification. Residues 68–79 are compositionally biased toward basic and acidic residues; it reads SDSQDSNTKDQP. The segment at 68-92 is disordered; that stretch reads SDSQDSNTKDQPLDNGMRDSSSIQR. The SPOR domain occupies 242-315; it reads SVSGGKFSLQ…YNQNAVLTRE (74 aa).

It belongs to the RlpA family.

It is found in the cell membrane. Lytic transglycosylase with a strong preference for naked glycan strands that lack stem peptides. This is Endolytic peptidoglycan transglycosylase RlpA from Helicobacter pylori (strain ATCC 700392 / 26695) (Campylobacter pylori).